The following is a 361-amino-acid chain: Hydroxymethylglutaryl-CoA synthase (361 aa).

Residue glutamate 92 is the Proton donor/acceptor of the active site. Cysteine 124 serves as the catalytic Acyl-thioester intermediate. Residues cysteine 124, serine 165, threonine 214, and histidine 247 each contribute to the (3S)-3-hydroxy-3-methylglutaryl-CoA site. The Proton donor/acceptor role is filled by histidine 247. Lysine 252 contributes to the CoA binding site. (3S)-3-hydroxy-3-methylglutaryl-CoA-binding residues include lysine 256, asparagine 279, and serine 309.

Belongs to the thiolase-like superfamily. Archaeal HMG-CoA synthase family. Interacts with acetoacetyl-CoA thiolase that catalyzes the precedent step in the pathway and with a DUF35 protein. The acetoacetyl-CoA thiolase/HMG-CoA synthase complex channels the intermediate via a fused CoA-binding site, which allows for efficient coupling of the endergonic thiolase reaction with the exergonic HMGCS reaction.

The catalysed reaction is acetoacetyl-CoA + acetyl-CoA + H2O = (3S)-3-hydroxy-3-methylglutaryl-CoA + CoA + H(+). It participates in metabolic intermediate biosynthesis; (R)-mevalonate biosynthesis; (R)-mevalonate from acetyl-CoA: step 2/3. In terms of biological role, catalyzes the condensation of acetyl-CoA with acetoacetyl-CoA to form 3-hydroxy-3-methylglutaryl-CoA (HMG-CoA). Functions in the mevalonate (MVA) pathway leading to isopentenyl diphosphate (IPP), a key precursor for the biosynthesis of isoprenoid compounds that are building blocks of archaeal membrane lipids. The sequence is that of Hydroxymethylglutaryl-CoA synthase from Aeropyrum pernix (strain ATCC 700893 / DSM 11879 / JCM 9820 / NBRC 100138 / K1).